A 122-amino-acid polypeptide reads, in one-letter code: Large ribosomal subunit protein uL14 (122 aa).

This sequence belongs to the universal ribosomal protein uL14 family. In terms of assembly, part of the 50S ribosomal subunit. Forms a cluster with proteins L3 and L19. In the 70S ribosome, L14 and L19 interact and together make contacts with the 16S rRNA in bridges B5 and B8.

Functionally, binds to 23S rRNA. Forms part of two intersubunit bridges in the 70S ribosome. The sequence is that of Large ribosomal subunit protein uL14 from Anaeromyxobacter sp. (strain Fw109-5).